The sequence spans 131 residues: Flagellar assembly factor FliW (131 aa).

It belongs to the FliW family. In terms of assembly, interacts with translational regulator CsrA and flagellin(s).

It localises to the cytoplasm. In terms of biological role, acts as an anti-CsrA protein, binds CsrA and prevents it from repressing translation of its target genes, one of which is flagellin. Binds to flagellin and participates in the assembly of the flagellum. This chain is Flagellar assembly factor FliW, found in Campylobacter lari (strain RM2100 / D67 / ATCC BAA-1060).